Reading from the N-terminus, the 1097-residue chain is Leukemia inhibitory factor receptor (1097 aa).

The N-terminal stretch at M1–S44 is a signal peptide. At E45 to S833 the chain is on the extracellular side. Positions K46 to N131 constitute a Fibronectin type-III 1 domain. Intrachain disulfides connect C55/C65 and C82/C90. N-linked (GlcNAc...) asparagine glycans are attached at residues N85, N131, N143, N191, N243, and N303. C213 and C270 are oxidised to a cystine. 5 Fibronectin type-III domains span residues P332 to R434, I435 to I534, G538 to D629, P627 to I719, and P724 to S833. A disulfide bridge connects residues C341 and C351. 8 N-linked (GlcNAc...) asparagine glycosylation sites follow: N366, N390, N407, N426, N445, N471, N481, and N489. A disulfide bridge links C466 with C511. The WSXWS motif signature appears at W519 to S523. N-linked (GlcNAc...) asparagine glycans are attached at residues N572, N652, N663, N680, N729, and N787. A helical membrane pass occupies residues V834 to T854. Over S855–D1097 the chain is Cytoplasmic. A Box 1 motif motif is present at residues F869 to E877. At S927 the chain carries Phosphoserine. 2 disordered regions span residues Q982–M1005 and L1022–D1097. Composition is skewed to polar residues over residues A1032–Q1067 and S1086–D1097. S1044 bears the Phosphoserine mark.

This sequence belongs to the type I cytokine receptor family. Type 2 subfamily. In terms of assembly, heterodimer composed of LIFR and IL6ST. The heterodimer formed by LIFR and IL6ST interacts with the complex formed by CNTF and CNTFR.

Its subcellular location is the cell membrane. In terms of biological role, signal-transducing molecule. May have a common pathway with IL6ST. The soluble form inhibits the biological activity of LIF by blocking its binding to receptors on target cells. The chain is Leukemia inhibitory factor receptor (LIFR) from Canis lupus familiaris (Dog).